The primary structure comprises 338 residues: Protein pelota homolog (338 aa).

Belongs to the eukaryotic release factor 1 family. Pelota subfamily. In terms of assembly, monomer. The cofactor is a divalent metal cation.

It is found in the cytoplasm. Functionally, may function in recognizing stalled ribosomes, interact with stem-loop structures in stalled mRNA molecules, and effect endonucleolytic cleavage of the mRNA. May play a role in the release non-functional ribosomes and degradation of damaged mRNAs. Has endoribonuclease activity. In Caldivirga maquilingensis (strain ATCC 700844 / DSM 13496 / JCM 10307 / IC-167), this protein is Protein pelota homolog.